Consider the following 177-residue polypeptide: MASHGSSCGACKFLRRKCNRDCVFSPYFSYEQASSHFAAVHKVFGASNVSKHLLHLPQHQRNIAAITISYEALSRMRDPVYGCVAHIFALHQQVVTLQEEIEFLGSQMKNFSYSNQNGSQLNNIPEFVNQMTMATTNFVDESVLNNADGRNCYDGFFTNSEEMLVNHQWLQNMDYYY.

The 103-residue stretch at 6–108 (SSCGACKFLR…EEIEFLGSQM (103 aa)) folds into the LOB domain.

The protein belongs to the LOB domain-containing protein family. As to expression, expressed in roots.

In Arabidopsis thaliana (Mouse-ear cress), this protein is LOB domain-containing protein 33 (LBD33).